We begin with the raw amino-acid sequence, 460 residues long: MALKTQLLWSFVVVFVVSFSTTSCSGSSFQEVNALHSYVDHVDDKESGYNSRAYPSYTDTIEGLKVMELIRPRTQLFSSRKLNTITGGIATSSAPAKTISVDDFGAKGNGADDTQAFVKAWKAACSSSGAMVLVVPQKNYLVRPIEFSGPCKSQLTLQIYGTIEASEDRSIYKDIDHWLIFDNVQNLLVVGPGTINGNGNIWWKNSCKIKPQPPCGTYAPTAVTFNRCNNLVVKNLNIQDAQQIHVIFQNCINVQASCLTVTAPEDSPNTDGIHVTNTQNITISSSVIGTGDDCISIVSGSQRVQATDITCGPGHGISIGSLGEDGSEDHVSGVFVNGAKLSGTSNGLRIKTWKGGSGSATNIVFQNVQMNDVTNPIIIDQNYCDHKTKDCKQQKSAVQVKNVLYQNIRGTSASGDAITLNCSQSVPCQGIVLQSVQLQNGRAECNNVQPAYKGVVSPRC.

A signal peptide spans 1-26; it reads MALKTQLLWSFVVVFVVSFSTTSCSG. Asparagine 280 carries an N-linked (GlcNAc...) asparagine glycan. Aspartate 292 (proton donor) is an active-site residue. The active site involves histidine 315. Asparagine 421 is a glycosylation site (N-linked (GlcNAc...) asparagine).

The protein belongs to the glycosyl hydrolase 28 family.

It localises to the secreted. Its subcellular location is the cell wall. The enzyme catalyses (1,4-alpha-D-galacturonosyl)n+m + H2O = (1,4-alpha-D-galacturonosyl)n + (1,4-alpha-D-galacturonosyl)m.. Acts in concert with the pectinesterase, in the ripening process. Is involved in cell wall metabolism, specifically in polyuronide degradation. In Malus domestica (Apple), this protein is Polygalacturonase.